Consider the following 218-residue polypeptide: Imidazole glycerol phosphate synthase subunit HisH (218 aa).

In terms of domain architecture, Glutamine amidotransferase type-1 spans 7-211 (STVIIDTGCA…LALDKASLDA (205 aa)). Cysteine 82 serves as the catalytic Nucleophile. Residues histidine 186 and glutamate 188 contribute to the active site.

In terms of assembly, heterodimer of HisH and HisF.

The protein resides in the cytoplasm. It carries out the reaction 5-[(5-phospho-1-deoxy-D-ribulos-1-ylimino)methylamino]-1-(5-phospho-beta-D-ribosyl)imidazole-4-carboxamide + L-glutamine = D-erythro-1-(imidazol-4-yl)glycerol 3-phosphate + 5-amino-1-(5-phospho-beta-D-ribosyl)imidazole-4-carboxamide + L-glutamate + H(+). The enzyme catalyses L-glutamine + H2O = L-glutamate + NH4(+). It participates in amino-acid biosynthesis; L-histidine biosynthesis; L-histidine from 5-phospho-alpha-D-ribose 1-diphosphate: step 5/9. IGPS catalyzes the conversion of PRFAR and glutamine to IGP, AICAR and glutamate. The HisH subunit catalyzes the hydrolysis of glutamine to glutamate and ammonia as part of the synthesis of IGP and AICAR. The resulting ammonia molecule is channeled to the active site of HisF. In Shewanella sediminis (strain HAW-EB3), this protein is Imidazole glycerol phosphate synthase subunit HisH.